A 211-amino-acid chain; its full sequence is Bacteriorhodopsin (211 aa).

The helical transmembrane segment at 1–19 (IWLWLGTAGMFLGMLYFIA) threads the bilayer. Residues 20 to 33 (RGWGETDSRRQKFY) lie on the Cytoplasmic side of the membrane. Residues 34 to 52 (IATILITAIAFVNYLAMAL) form a helical membrane-spanning segment. Over 53-68 (GFGLTIVEFAGEEHPI) the chain is Extracellular. A helical membrane pass occupies residues 69–86 (YWARYSDWLFTTPLLLYD). The Cytoplasmic portion of the chain corresponds to 87–97 (LGLLAGADRNT). A helical transmembrane segment spans residues 98-117 (ITSLVSLDVLMIGTGLVATL). The Extracellular segment spans residues 118 to 130 (SAGSGVLSAGAER). The helical transmembrane segment at 131–150 (LVWWGISTAFLLVLLYFLFS) threads the bilayer. At 151–168 (SLSGRVADLPSDTRSTFK) the chain is on the cytoplasmic side. The chain crosses the membrane as a helical span at residues 169–187 (TLRNLVTVVWLVYPVWWLI). Residues 188 to 199 (GTEGIGLVGIGI) are Extracellular-facing. Residues 200–211 (ETAGFMVIDLTA) traverse the membrane as a helical segment.

Belongs to the archaeal/bacterial/fungal opsin family.

The protein localises to the cell membrane. Its function is as follows. Light-driven proton pump. This Halobacterium halobium (strain port) protein is Bacteriorhodopsin (bop).